Reading from the N-terminus, the 508-residue chain is Photosystem II CP47 reaction center protein (508 aa).

A run of 6 helical transmembrane segments spans residues 21-36 (AVHI…WAGS), 101-115 (IVFS…IWHW), 140-156 (GIHL…FGAF), 203-218 (IAAG…FHLS), 237-252 (VLSS…AFVV), and 457-472 (TFAL…HGAR).

This sequence belongs to the PsbB/PsbC family. PsbB subfamily. PSII is composed of 1 copy each of membrane proteins PsbA, PsbB, PsbC, PsbD, PsbE, PsbF, PsbH, PsbI, PsbJ, PsbK, PsbL, PsbM, PsbT, PsbX, PsbY, PsbZ, Psb30/Ycf12, at least 3 peripheral proteins of the oxygen-evolving complex and a large number of cofactors. It forms dimeric complexes. Binds multiple chlorophylls. PSII binds additional chlorophylls, carotenoids and specific lipids. is required as a cofactor.

The protein localises to the plastid. The protein resides in the chloroplast thylakoid membrane. Functionally, one of the components of the core complex of photosystem II (PSII). It binds chlorophyll and helps catalyze the primary light-induced photochemical processes of PSII. PSII is a light-driven water:plastoquinone oxidoreductase, using light energy to abstract electrons from H(2)O, generating O(2) and a proton gradient subsequently used for ATP formation. This is Photosystem II CP47 reaction center protein from Secale cereale (Rye).